We begin with the raw amino-acid sequence, 390 residues long: S-adenosylmethionine synthase 1 (390 aa).

Glu-9 is a binding site for Mg(2+). Residue His-15 participates in ATP binding. K(+) is bound at residue Glu-43. Positions 56 and 99 each coordinate L-methionine. ATP contacts are provided by residues 167–169, 235–238, Asp-246, 252–253, Ala-269, Lys-273, and Lys-277; these read DGK, SGRF, and RK. Asp-246 is an L-methionine binding site. L-methionine is bound at residue Lys-277.

Belongs to the AdoMet synthase family. In terms of assembly, homotetramer. Mn(2+) serves as cofactor. Requires Mg(2+) as cofactor. It depends on Co(2+) as a cofactor. K(+) is required as a cofactor.

The protein localises to the cytoplasm. The enzyme catalyses L-methionine + ATP + H2O = S-adenosyl-L-methionine + phosphate + diphosphate. The protein operates within amino-acid biosynthesis; S-adenosyl-L-methionine biosynthesis; S-adenosyl-L-methionine from L-methionine: step 1/1. In terms of biological role, catalyzes the formation of S-adenosylmethionine from methionine and ATP. The reaction comprises two steps that are both catalyzed by the same enzyme: formation of S-adenosylmethionine (AdoMet) and triphosphate, and subsequent hydrolysis of the triphosphate. This chain is S-adenosylmethionine synthase 1 (SAM1), found in Petunia hybrida (Petunia).